A 372-amino-acid polypeptide reads, in one-letter code: Lysophosphatidic acid receptor 5 (372 aa).

Over 1–30 (MFANSSANTTSTNSSVLQCPDYRDTHRLHM) the chain is Extracellular. 3 N-linked (GlcNAc...) asparagine glycosylation sites follow: asparagine 4, asparagine 8, and asparagine 13. A helical transmembrane segment spans residues 31–51 (VVYSLVLATGLPLNALALWVF). The Cytoplasmic portion of the chain corresponds to 52–59 (LRVLRVHS). A helical membrane pass occupies residues 60 to 80 (VVSVYMCNLAASDLLFTLSLP). Topologically, residues 81–100 (LRLSYYAQHHWPFPGFLCQT) are extracellular. Cysteine 98 and cysteine 179 are disulfide-bonded. Residues 101–121 (SGAIFQMNMYGSCLFLMLINV) form a helical membrane-spanning segment. Over 122–140 (DRYAAIVHPLRLRHLRRPR) the chain is Cytoplasmic. Residues 141-161 (VARRLCLGVWALILLFAVPAA) form a helical membrane-spanning segment. The Extracellular segment spans residues 162 to 191 (RVHSPSHCTYKNITVRLCFESFSDELWKGR). An N-linked (GlcNAc...) asparagine glycan is attached at asparagine 173. Residues 192–212 (LLPLLLLAEILGFLLPLAAVV) traverse the membrane as a helical segment. At 213 to 243 (YSSGRVFWTLARPDATQSQRRRKTVRLLLAN) the chain is on the cytoplasmic side. A helical transmembrane segment spans residues 244–264 (LIIFLLCFVPYNSTLAVYGLL). The Extracellular segment spans residues 265 to 280 (RANLVKNSIQDRDQVR). A helical transmembrane segment spans residues 281-301 (GVLMIMVLLAGANCVLDPLVY). Over 302–372 (YFSAEGFRNT…PDNCSQDSAL (71 aa)) the chain is Cytoplasmic.

It belongs to the G-protein coupled receptor 1 family.

It is found in the cell membrane. Its function is as follows. Receptor for lysophosphatidic acid (LPA), a mediator of diverse cellular activities. The protein is Lysophosphatidic acid receptor 5 (Lpar5) of Mus musculus (Mouse).